The chain runs to 2230 residues: Golgin subfamily A member 4 (2230 aa).

Residues 1 to 64 (MFKKLKQKIS…SGDTQSFAQK (64 aa)) are disordered. S10 carries the phosphoserine modification. The span at 12 to 41 (EQQQLQQALAPAQASSNSSTPTRMRSRTSS) shows a compositional bias: low complexity. A Phosphothreonine modification is found at T39. Phosphoserine occurs at positions 41, 71, 78, and 89. The span at 87–107 (SSSKESLVRTSSRESLNRLDL) shows a compositional bias: basic and acidic residues. The segment at 87–127 (SSSKESLVRTSSRESLNRLDLDSSTASFDPPSDMDSEAEDL) is disordered. Residues 133–203 (SLNKEQLIQR…EELQMDQQAK (71 aa)) are interaction with MACF1. Residues 133 to 2185 (SLNKEQLIQR…EYLRKVLFEY (2053 aa)) adopt a coiled-coil conformation. A Phosphoserine modification is found at S266. 2 N-linked (GlcNAc...) asparagine glycosylation sites follow: N585 and N1612. A GRIP domain is found at 2168 to 2215 (LFGEPTEFEYLRKVLFEYMMGRETKTMAKVITTVLKFPDDQTQKILER). T2223 is subject to Phosphothreonine.

As to quaternary structure, homodimer. Interacts with RAB6A. Interacts with GTP-bound ARL1 and ARL3. Interacts with MACF1. Directly interacts with TBC1D23. Interacts with FAM91A1; this interaction may be mediated by TBC1D23.

The protein localises to the cytoplasm. The protein resides in the golgi apparatus membrane. It localises to the golgi apparatus. Its subcellular location is the trans-Golgi network membrane. Functionally, involved in vesicular trafficking at the Golgi apparatus level. May play a role in delivery of transport vesicles containing GPI-linked proteins from the trans-Golgi network through its interaction with MACF1. Involved in endosome-to-Golgi trafficking. In Homo sapiens (Human), this protein is Golgin subfamily A member 4 (GOLGA4).